A 55-amino-acid chain; its full sequence is Photosystem II reaction center X protein (55 aa).

A helical membrane pass occupies residues 24–44 (IGSFLAAAALIVVPAASFLLW).

The protein belongs to the PsbX family. Type 2 subfamily. In terms of assembly, PSII consists of a core antenna complex that captures photons, and an electron transfer chain that converts photonic excitation into a charge separation. PSII forms dimeric complexes.

It is found in the cellular thylakoid membrane. Involved in the binding and/or turnover of quinones at the Q(B) site of Photosystem II. The polypeptide is Photosystem II reaction center X protein (Prochlorococcus marinus (strain SARG / CCMP1375 / SS120)).